The chain runs to 451 residues: Chromosomal replication initiator protein DnaA (451 aa).

Residues 1-72 (MSLPTSLWDK…TELLDELSDT (72 aa)) are domain I, interacts with DnaA modulators. The segment at 72-114 (TPPQIRLQIGSRSTEMPTKNSHEPSHRKAAAPPAGTTISHTQA) is domain II. Polar residues predominate over residues 81–90 (GSRSTEMPTK). Residues 81-106 (GSRSTEMPTKNSHEPSHRKAAAPPAG) are disordered. Residues 115–331 (NINSNFTFDS…GALKRVIANA (217 aa)) form a domain III, AAA+ region region. Positions 159, 161, 162, and 163 each coordinate ATP. Residues 332 to 451 (HFTGQSITVD…YKNLMRILSG (120 aa)) are domain IV, binds dsDNA.

It belongs to the DnaA family. Oligomerizes as a right-handed, spiral filament on DNA at oriC.

It localises to the cytoplasm. Plays an essential role in the initiation and regulation of chromosomal replication. ATP-DnaA binds to the origin of replication (oriC) to initiate formation of the DNA replication initiation complex once per cell cycle. Binds the DnaA box (a 9 base pair repeat at the origin) and separates the double-stranded (ds)DNA. Forms a right-handed helical filament on oriC DNA; dsDNA binds to the exterior of the filament while single-stranded (ss)DNA is stabiized in the filament's interior. The ATP-DnaA-oriC complex binds and stabilizes one strand of the AT-rich DNA unwinding element (DUE), permitting loading of DNA polymerase. After initiation quickly degrades to an ADP-DnaA complex that is not apt for DNA replication. Binds acidic phospholipids. The protein is Chromosomal replication initiator protein DnaA of Coxiella burnetii (strain CbuK_Q154) (Coxiella burnetii (strain Q154)).